The primary structure comprises 644 residues: Low affinity sulfate transporter 3 (644 aa).

The span at 1-19 (MSSLGTEQFSERSQWVLNS) shows a compositional bias: polar residues. The interval 1 to 20 (MSSLGTEQFSERSQWVLNSP) is disordered. Helical transmembrane passes span 50–70 (AVSF…YSAT), 76–96 (LLSG…YANL), 99–119 (LDPQ…ALMG), 124–144 (IAIG…PKVI), 156–176 (LVFT…VLRL), 179–199 (LVDF…AIVI), 242–262 (PLNF…RFIG), 268–288 (FFWL…LIVF), 328–348 (IGLI…RSFA), 394–414 (CKTA…LELF), 418–438 (LYYT…PGLI), 455–475 (LACL…GLLI), and 518–538 (PGIL…AGFV). The STAS domain occupies 511 to 635 (YPMAVTTPGI…LTVAEAVDAC (125 aa)).

It belongs to the SLC26A/SulP transporter (TC 2.A.53) family.

Its subcellular location is the membrane. In terms of biological role, low-affinity H(+)/sulfate cotransporter which may be involved in the internal transport of sulfate between cellular or subcellular compartments within the plant. The chain is Low affinity sulfate transporter 3 (ST3) from Stylosanthes hamata (Caribbean stylo).